Reading from the N-terminus, the 365-residue chain is Glycine oxidase (365 aa).

FAD contacts are provided by residues 12 to 13 (VI), 32 to 33 (DQ), 40 to 41 (SS), 45 to 47 (GGI), and I173. Residue R302 participates in substrate binding. 327–333 (HYRNGLV) contributes to the FAD binding site.

Belongs to the DAO family. ThiO subfamily. As to quaternary structure, monomer. FAD serves as cofactor.

The enzyme catalyses glycine + O2 + H2O = glyoxylate + H2O2 + NH4(+). The catalysed reaction is sarcosine + O2 + H2O = methylamine + glyoxylate + H2O2. It participates in cofactor biosynthesis; thiamine diphosphate biosynthesis. Functionally, catalyzes the oxidation of glycine, leading to glyoxyl imine and hydrogen peroxide as primary products; glyoxyl imine is used for the biosynthesis of the thiazole ring of thiamine. Otherwise, glyoxyl imine is spontaneously hydrolyzed in water to produce glyoxylate and ammonia. Can also use sarcosine (N-methylglycine) as substrate, and, to a lesser extent, N-ethylglycine and D-proline. Has no activity towards other amino-acids D-Asp, D-Glu, D-Gln, D-His, D-Leu, D-Lys, D-ornithine, D-Trp, D-Val, L-Ala, L-Asp, L-Glu, L-His, L-Leu, L-Lys, L-Met and L-Pro. The sequence is that of Glycine oxidase from Pseudomonas putida (strain ATCC 47054 / DSM 6125 / CFBP 8728 / NCIMB 11950 / KT2440).